The following is a 460-amino-acid chain: Argininosuccinate lyase (460 aa).

Belongs to the lyase 1 family. Argininosuccinate lyase subfamily.

It is found in the cytoplasm. The enzyme catalyses 2-(N(omega)-L-arginino)succinate = fumarate + L-arginine. Its pathway is amino-acid biosynthesis; L-arginine biosynthesis; L-arginine from L-ornithine and carbamoyl phosphate: step 3/3. In Mannheimia succiniciproducens (strain KCTC 0769BP / MBEL55E), this protein is Argininosuccinate lyase.